Reading from the N-terminus, the 188-residue chain is dCTP deaminase (188 aa).

DCTP contacts are provided by residues 111 to 116, 135 to 137, glutamine 156, tyrosine 170, and glutamine 180; these read KSTYAR and TLE. Glutamate 137 (proton donor/acceptor) is an active-site residue.

This sequence belongs to the dCTP deaminase family. Homotrimer.

It carries out the reaction dCTP + H2O + H(+) = dUTP + NH4(+). It functions in the pathway pyrimidine metabolism; dUMP biosynthesis; dUMP from dCTP (dUTP route): step 1/2. In terms of biological role, catalyzes the deamination of dCTP to dUTP. The polypeptide is dCTP deaminase (Cupriavidus necator (strain ATCC 17699 / DSM 428 / KCTC 22496 / NCIMB 10442 / H16 / Stanier 337) (Ralstonia eutropha)).